We begin with the raw amino-acid sequence, 175 residues long: Regenerating islet-derived protein 3-alpha (175 aa).

An N-terminal signal peptide occupies residues 1–26; it reads MLPPMALPSVSWMLLSCLMLLSQVQG. The propeptide occupies 27-37; the sequence is EEPQRELPSAR. Intrachain disulfides connect Cys40–Cys51, Cys68–Cys171, and Cys146–Cys163. The C-type lectin domain occupies 47–172; sequence YGSHCYALFL…CNVRLPYVCK (126 aa). Zn(2+) contacts are provided by His50 and His107. Residues 103 to 118 form a sufficient to activate EXTL3 region; that stretch reads WIGLHDPTQGTEPNGE. The EPN motif lies at 114–116; it reads EPN. 2 residues coordinate Zn(2+): Glu121 and His145.

As to quaternary structure, forms a hexameric membrane-permeabilizing oligomeric pore on membrane phospholipids. The hexamer is formed by three dimers related by helical symmetry. Forms filaments, filamentation traps pore complexes and limits damage to host cells. Interacts with EXTL3. Post-translationally, proteolytic processing by trypsin removes an inhibitory N-terminal propeptide and is essential for peptidoglycan binding and antibacterial activity. Expressed by keratinocytes. Highly expressed in epidermal keratinocytes of psoriasis patients (at protein level). Constitutively expressed in intestine. Low expression is found in healthy pancreas. Overexpressed during the acute phase of pancreatitis and in some patients with chronic pancreatitis.

The protein localises to the secreted. Its activity is regulated as follows. Lipopolysaccharide inhibits pore-forming activity, explaining why is bactericidal for Gram-positive but not Gram-negative bacteria. In terms of biological role, bactericidal C-type lectin which acts exclusively against Gram-positive bacteria and mediates bacterial killing by binding to surface-exposed carbohydrate moieties of peptidoglycan. Binds membrane phospholipids and kills bacteria by forming a hexameric membrane-permeabilizing oligomeric pore. Acts as a hormone in response to different stimuli like anti-inflammatory signals, such as IL17A, or gut microbiome. Secreted by different cell types to activate its receptor EXTL3 and induce cell specific signaling pathways. Induced by IL17A in keratinocytes, regulates keratinocyte proliferation and differentiation after skin injury via activation of EXTL3-PI3K-AKT signaling pathway. In parallel, inhibits skin inflammation through the inhibition of inflammatory cytokines such as IL6 and TNF. In pancreas, is able to permealize beta-cells membrane and stimulate their proliferation. Its function is as follows. Has bacteriostatic activity. The sequence is that of Regenerating islet-derived protein 3-alpha from Homo sapiens (Human).